The chain runs to 129 residues: Fluoride-specific ion channel FluC 2 (129 aa).

A helical membrane pass occupies residues 19-39 (GLGLVVPAAAVGGFPLGTLFI). Na(+) is bound by residues Gly-74 and Thr-77. Residues 95-115 (FGMAAVYIAASLFGGLLASWA) traverse the membrane as a helical segment.

Belongs to the fluoride channel Fluc/FEX (TC 1.A.43) family.

It localises to the cell membrane. The catalysed reaction is fluoride(in) = fluoride(out). Na(+) is not transported, but it plays an essential structural role and its presence is essential for fluoride channel function. Functionally, fluoride-specific ion channel. Important for reducing fluoride concentration in the cell, thus reducing its toxicity. This Geobacillus kaustophilus (strain HTA426) protein is Fluoride-specific ion channel FluC 2.